The chain runs to 89 residues: Large ribosomal subunit protein bL27 (89 aa).

A disordered region spans residues 1–24 (MAHKKGTGSTRNGRDSNSKRLGVK).

Belongs to the bacterial ribosomal protein bL27 family.

This Synechococcus sp. (strain WH7803) protein is Large ribosomal subunit protein bL27.